A 474-amino-acid chain; its full sequence is Stabilizer of axonemal microtubules 1 (474 aa).

Mn stretches follow at residues 30-64 (KPCLLSEYTENYPFYHSYLPRESFKPRREYQKGPI), 65-97 (PMEGLTTSRRDFGPHKVAPVKVHQYDQFVPSEE), 98-131 (NMDLLTTYKKDYNPYPVCRVDPIKPRDSKYPCSD), 132-165 (KMECLPTYKADYLPWNQPRREPLRLEHKYQPASV), 166-199 (RFDNRTTHQDDYPIKGLVKTISCKPLAMPKLCNI), 200-232 (PLEDVTNYKMSYVAHPVEKRFVHEAEKFRPCEI), 233-266 (PFESLTTQKQSYRGLMGEPAKSLKPLARPPGLDM), 267-299 (PFCNTTEFRDKYQAWPMPRMFSKAPITYVPPED), 300-332 (RMDLLTTVQAHYTCPKGAPAQSCRPALQIKKCG), 333-366 (RFEGSSTTKDDYKQWSSMRTEPVKPVPQLDLPTE), 367-400 (PLDCLTTTRAHYVPHLPINTKSCKPHWSGPRGNV), and 401-434 (PVESQTTYTISFTPKEMGRCLASYPEPPGYTFEE). The interval 446–474 (VSQAGSQQSSHLSVDDSENPNQRELEVLA) is disordered. Positions 448–457 (QAGSQQSSHL) are enriched in polar residues.

This sequence belongs to the FAM154 family. In terms of assembly, associates with microtubules via the Mn regions. In terms of tissue distribution, widely expressed, with highest levels in testis. Expressed in mature spermatozoa (at protein level).

It localises to the cytoplasm. The protein resides in the cytoskeleton. It is found in the microtubule organizing center. Its subcellular location is the centrosome. The protein localises to the centriole. It localises to the cilium basal body. The protein resides in the cilium axoneme. It is found in the flagellum axoneme. May play a role in the regulation of cilium length. Stabilizes microtubules at low temperature. This chain is Stabilizer of axonemal microtubules 1 (SAXO1), found in Homo sapiens (Human).